We begin with the raw amino-acid sequence, 787 residues long: Putative pentatricopeptide repeat-containing protein At1g69350, mitochondrial (787 aa).

The transit peptide at 1-16 (MTQYMPLFRSCSSLRL) directs the protein to the mitochondrion. PPR repeat units lie at residues 33 to 63 (DPLPVTKLIESYAFMGSPDSSRLVFEAFPYP), 64 to 98 (DSFMYGVLIKCNVWCHLLDAAIDLYHRLVSETTQI), 99 to 134 (SKFVFPSVLRACAGSREHLSVGGKVHGRIIKGGVDD), 135 to 165 (DAVIETSLLCMYGQTGNLSDAEKVFDGMPVR), 166 to 200 (DLVAWSTLVSSCLENGEVVKALRMFKCMVDDGVEP), 201 to 235 (DAVTMISVVEGCAELGCLRIARSVHGQITRKMFDL), 236 to 266 (DETLCNSLLTMYSKCGDLLSSERIFEKIAKK), 267 to 301 (NAVSWTAMISSYNRGEFSEKALRSFSEMIKSGIEP), 302 to 336 (NLVTLYSVLSSCGLIGLIREGKSVHGFAVRRELDP), 338 to 368 (YESLSLALVELYAECGKLSDCETVLRVVSDR), 369 to 403 (NIVAWNSLISLYAHRGMVIQALGLFRQMVTQRIKP), 404 to 434 (DAFTLASSISACENAGLVPLGKQIHGHVIRT), 438 to 468 (DEFVQNSLIDMYSKSGSVDSASTVFNQIKHR), 469 to 503 (SVVTWNSMLCGFSQNGNSVEAISLFDYMYHSYLEM), 504 to 534 (NEVTFLAVIQACSSIGSLEKGKWVHHKLIIS), 538 to 568 (DLFTDTALIDMYAKCGDLNAAETVFRAMSSR), 569 to 603 (SIVSWSSMINAYGMHGRIGSAISTFNQMVESGTKP), 604 to 638 (NEVVFMNVLSACGHSGSVEEGKYYFNLMKSFGVSP), and 639 to 669 (NSEHFACFIDLLSRSGDLKEAYRTIKEMPFL). The segment at 674–749 (VWGSLVNGCR…VPGYSAIEID (76 aa)) is type E motif. The tract at residues 750–780 (QKVFRFGAGEENRIQTDEIYRFLGNLQNLTN) is type E(+) motif.

The protein belongs to the PPR family. PCMP-E subfamily.

It localises to the mitochondrion. This Arabidopsis thaliana (Mouse-ear cress) protein is Putative pentatricopeptide repeat-containing protein At1g69350, mitochondrial (PCMP-E66).